Here is a 181-residue protein sequence, read N- to C-terminus: Large ribosomal subunit protein uL16 (181 aa).

The protein belongs to the universal ribosomal protein uL16 family.

This is Large ribosomal subunit protein uL16 from Pyrococcus horikoshii (strain ATCC 700860 / DSM 12428 / JCM 9974 / NBRC 100139 / OT-3).